A 162-amino-acid chain; its full sequence is NADH-quinone oxidoreductase subunit I (162 aa).

4Fe-4S ferredoxin-type domains are found at residues 54–83 (RRYE…INST) and 93–122 (SSYE…ETNI). Positions 63, 66, 69, 73, 102, 105, 108, and 112 each coordinate [4Fe-4S] cluster.

This sequence belongs to the complex I 23 kDa subunit family. NDH-1 is composed of 14 different subunits. Subunits NuoA, H, J, K, L, M, N constitute the membrane sector of the complex. Requires [4Fe-4S] cluster as cofactor.

The protein localises to the cell inner membrane. The enzyme catalyses a quinone + NADH + 5 H(+)(in) = a quinol + NAD(+) + 4 H(+)(out). In terms of biological role, NDH-1 shuttles electrons from NADH, via FMN and iron-sulfur (Fe-S) centers, to quinones in the respiratory chain. The immediate electron acceptor for the enzyme in this species is believed to be ubiquinone. Couples the redox reaction to proton translocation (for every two electrons transferred, four hydrogen ions are translocated across the cytoplasmic membrane), and thus conserves the redox energy in a proton gradient. The polypeptide is NADH-quinone oxidoreductase subunit I (Francisella tularensis subsp. tularensis (strain FSC 198)).